The chain runs to 718 residues: Nucleolar protein 11 (718 aa).

At K346 the chain carries N6-methyllysine.

Interacts with UTP4. Interacts with FBL/fibrillarin in a transcription-dependent manner. May associate with the proposed t-UTP subcomplex of the SSU processome containing at least UTP4, WDR43, HEATR1, UTP15, WDR75.

The protein resides in the nucleus. It localises to the nucleolus. Ribosome biogenesis factor. May be required for both optimal rDNA transcription and small subunit (SSU) pre-rRNA processing at sites A', A0, 1 and 2b. This chain is Nucleolar protein 11 (NOL11), found in Bos taurus (Bovine).